A 122-amino-acid polypeptide reads, in one-letter code: Semaphorin-like protein A43 (122 aa).

In terms of domain architecture, Sema spans 1-122; that stretch reads MIYLYTADNV…RIMYLFYEYH (122 aa).

This sequence belongs to the semaphorin family.

This is Semaphorin-like protein A43 (A43R) from Homo sapiens (Human).